Consider the following 895-residue polypeptide: Iron-regulated surface determinant protein H (895 aa).

A signal peptide spans 1-40; it reads MNKHHPKLRSFYSIRKSTLGVASVIVSTLFLITSQHQAQA. Residues 42 to 85 form a disordered region; it reads ENTNTSDKISENQNNNATTTQPPKDTNQTQPATQPANTAKNYPA. A compositionally biased stretch (low complexity) spans 53-62; sequence NQNNNATTTQ. Polar residues predominate over residues 63-81; the sequence is PPKDTNQTQPATQPANTAK. Positions 105–232 constitute an NEAT 1 domain; sequence DIGPREQVNF…IYNDPSLVKS (128 aa). The interval 241–324 is disordered; that stretch reads NDQSSSVASN…NQSDVNQQYP (84 aa). Over residues 243–276 the composition is skewed to low complexity; it reads QSSSVASNQTNTNTSNQNTSTINNANNQPQATTN. Residues 277-323 show a composition bias toward polar residues; it reads MSQPAQPKSSTNADQASSQPAHETNSNGNTNDKTNESSNQSDVNQQY. NEAT domains are found at residues 345 to 471 and 543 to 660; these read TADN…DYVD and QLTD…TKDD. Disordered stretches follow at residues 657-720, 751-782, and 841-868; these read TKDD…DNNI, QIAK…DSNK, and KTKE…GETT. Polar residues-rich tracts occupy residues 663–677 and 687–697; these read SQNN…QTGQ and AENSSTATNPK. Composition is skewed to basic and acidic residues over residues 698–720, 751–765, and 841–854; these read DASD…DNNI, QIAK…KDAD, and KTKE…KENK. Positions 855–868 are enriched in polar residues; that stretch reads LSQSKMLPKTGETT. The LPXTG sorting signal motif lies at 861–865; the sequence is LPKTG. Position 864 is a pentaglycyl murein peptidoglycan amidated threonine (T864). The propeptide at 865-895 is removed by sortase; the sequence is GETTSSQSWWGLYALLGMLALFIPKFRKESK.

The protein belongs to the IsdH family.

The protein localises to the secreted. It is found in the cell wall. Its function is as follows. Binds human plasma haptoglobin-hemoglobin complexes, haptoglobin and hemoglobin. Binds haptoglobin-hemoglobin complexes with significantly higher affinity than haptoglobin alone. The protein is Iron-regulated surface determinant protein H (isdH) of Staphylococcus aureus (strain COL).